Here is a 276-residue protein sequence, read N- to C-terminus: Glutamate 5-kinase (276 aa).

Position 14 (K14) interacts with ATP. The substrate site is built by S54, D141, and N157. Residues 177–178 (SD) and 219–225 (TGGMLTK) each bind ATP.

Belongs to the glutamate 5-kinase family.

The protein resides in the cytoplasm. It carries out the reaction L-glutamate + ATP = L-glutamyl 5-phosphate + ADP. Its pathway is amino-acid biosynthesis; L-proline biosynthesis; L-glutamate 5-semialdehyde from L-glutamate: step 1/2. Catalyzes the transfer of a phosphate group to glutamate to form L-glutamate 5-phosphate. This chain is Glutamate 5-kinase, found in Listeria monocytogenes serotype 4a (strain HCC23).